Here is a 237-residue protein sequence, read N- to C-terminus: Uracil-DNA glycosylase (237 aa).

The active-site Proton acceptor is Asp-77.

The protein belongs to the uracil-DNA glycosylase (UDG) superfamily. UNG family.

It is found in the cytoplasm. The enzyme catalyses Hydrolyzes single-stranded DNA or mismatched double-stranded DNA and polynucleotides, releasing free uracil.. Its function is as follows. Excises uracil residues from the DNA which can arise as a result of misincorporation of dUMP residues by DNA polymerase or due to deamination of cytosine. In Acinetobacter baumannii (strain AB307-0294), this protein is Uracil-DNA glycosylase.